Here is a 520-residue protein sequence, read N- to C-terminus: 1,4-alpha-glucan branching enzyme TTHA1902 (520 aa).

Catalysis depends on Glu-184, which acts as the Nucleophile. Positions 265 and 282 each coordinate substrate. Asp-353 functions as the Proton donor in the catalytic mechanism. Positions 404, 460, and 469 each coordinate substrate.

This sequence belongs to the glycosyl hydrolase 57 family.

It catalyses the reaction Transfers a segment of a (1-&gt;4)-alpha-D-glucan chain to a primary hydroxy group in a similar glucan chain.. Its pathway is glycan biosynthesis; glycogen biosynthesis. Catalyzes the formation of branch points in alpha-glucans by cleavage of an alpha-1,4 glycosidic bond and subsequent transfer of the cleaved-off oligosaccharide to a new alpha-1,6 position. The branch chain-length distribution of the reaction products shows degree of polymerization (DP) of 3 to 13, with two local maxima at DP 7 and DP 11. Exhibits an alpha-retaining catalytic mechanism. Is involved in glycogen biosynthesis. Shows a secondary activity, i.e. the hydrolysis of the substrate, being 4% of the total activity. Can use amylose as substrate but not alpha-1,4-linked oligosaccharides of 2-7 glucose residues, beta-cyclodextrin, 6-O-glucosyl-beta-cyclodextrin and 6-O-maltosyl-beta-cyclodextrin. Is not able to branch amylopectin further, it only hydrolyzes amylopectin. Thus, displays preference for linear and long substrates (amylose) over branched structures (amylopectin). The chain is 1,4-alpha-glucan branching enzyme TTHA1902 from Thermus thermophilus (strain ATCC 27634 / DSM 579 / HB8).